Reading from the N-terminus, the 784-residue chain is E3 ubiquitin-protein ligase RNF43 (784 aa).

An N-terminal signal peptide occupies residues 1-23; sequence MSGGHQLQLAVLWPWLLMATLHA. The Extracellular segment spans residues 24–197; sequence GFGHTGRVLA…LKEPPAGANY (174 aa). N-linked (GlcNAc...) asparagine glycosylation is found at N62 and N92. Residues C91 and C119 are joined by a disulfide bond. Residues 198–218 form a helical membrane-spanning segment; that stretch reads DVWILLTVVGTVFVIILASVL. At 219–784 the chain is on the cytoplasmic side; that stretch reads RIRCRPHHSR…ELEELCEQAV (566 aa). The RING-type; atypical zinc-finger motif lies at 272–313; the sequence is CAICLEEFSEGQELRVISCLHEFHRTCVDPWLYQHRTCPLCM. Disordered stretches follow at residues 364 to 407, 459 to 478, and 516 to 671; these read TSVA…HLAV, ADGPASDSSSGPCHGSSSDS, and DLQG…SLPP. Residues 386 to 395 show a composition bias toward basic residues; the sequence is RHQRLPRTSH. Residues 464-478 are compositionally biased toward low complexity; that stretch reads SDSSSGPCHGSSSDS. A compositionally biased stretch (basic residues) spans 548 to 568; sequence IHYHRHRHHHYKRQFQWHGRK. Over residues 583-608 the composition is skewed to polar residues; sequence SHTQLEPSLPDQQLITPNPTASSMLP. The segment covering 618 to 629 has biased composition (low complexity); sequence EPAPGLAEASSP.

Belongs to the ZNRF3 family. Interacts with AKAP8L, NONO and SFPQ. Interacts with FZD5. Identified in a complex composed of RNF43, LGR5 and RSPO1. Interacts with RSPO2. Interacts with LMBR1L. Post-translationally, autoubiquitinated. As to expression, expressed in crypt base columnar cells of small intestinal epithelium. Crypt base columnar cells are small cycling cells residing between the terminally differentiated Paneth cells at crypt bottoms. Colocalizes with Lgr5-positive stem cells.

The protein localises to the cell membrane. Its subcellular location is the endoplasmic reticulum membrane. It is found in the nucleus envelope. It catalyses the reaction S-ubiquitinyl-[E2 ubiquitin-conjugating enzyme]-L-cysteine + [acceptor protein]-L-lysine = [E2 ubiquitin-conjugating enzyme]-L-cysteine + N(6)-ubiquitinyl-[acceptor protein]-L-lysine.. It participates in protein modification; protein ubiquitination. In terms of biological role, E3 ubiquitin-protein ligase that acts as a negative regulator of the Wnt signaling pathway by mediating the ubiquitination, endocytosis and subsequent degradation of Wnt receptor complex components Frizzled. Acts on both canonical and non-canonical Wnt signaling pathway. Along with RSPO2 and ZNRF3, constitutes a master switch that governs limb specification. The polypeptide is E3 ubiquitin-protein ligase RNF43 (Rnf43) (Mus musculus (Mouse)).